The chain runs to 194 residues: Adenylate kinase isoenzyme 1 (194 aa).

Met-1 carries the post-translational modification N-acetylmethionine. Residue Gly-18–Thr-23 participates in ATP binding. Ser-38 is modified (phosphoserine). The segment at Ser-38–Val-67 is NMP. Residues Thr-39, Arg-44, Gln-65–Val-67, Gly-94–Arg-97, and Gln-101 each bind AMP. The segment at Lys-131 to Asp-141 is LID. Arg-132 is an ATP binding site. 2 residues coordinate AMP: Arg-138 and Arg-149. Gly-177 contacts ATP.

The protein belongs to the adenylate kinase family. AK1 subfamily. In terms of assembly, monomer. It depends on Mg(2+) as a cofactor.

The protein resides in the cytoplasm. The catalysed reaction is a ribonucleoside 5'-phosphate + ATP = a ribonucleoside 5'-diphosphate + ADP. It catalyses the reaction AMP + ATP = 2 ADP. It carries out the reaction dAMP + ATP = dADP + ADP. The enzyme catalyses dATP + AMP = dADP + ADP. The catalysed reaction is dAMP + dATP = 2 dADP. It catalyses the reaction a 2'-deoxyribonucleoside 5'-diphosphate + ATP = a 2'-deoxyribonucleoside 5'-triphosphate + ADP. It carries out the reaction a ribonucleoside 5'-diphosphate + ATP = a ribonucleoside 5'-triphosphate + ADP. The enzyme catalyses CDP + GTP = CTP + GDP. The catalysed reaction is GDP + ATP = GTP + ADP. It catalyses the reaction UDP + ATP = UTP + ADP. It carries out the reaction GTP + UDP = UTP + GDP. The enzyme catalyses dTDP + GTP = dTTP + GDP. The catalysed reaction is dCDP + GTP = dCTP + GDP. It catalyses the reaction dGDP + ATP = dGTP + ADP. It carries out the reaction dADP + GTP = dATP + GDP. The enzyme catalyses thiamine diphosphate + ADP = thiamine triphosphate + AMP. In terms of biological role, catalyzes the reversible transfer of the terminal phosphate group between ATP and AMP. Also displays broad nucleoside diphosphate kinase activity. Plays an important role in cellular energy homeostasis and in adenine nucleotide metabolism. Also catalyzes at a very low rate the synthesis of thiamine triphosphate (ThTP) from thiamine diphosphate (ThDP) and ADP. The protein is Adenylate kinase isoenzyme 1 of Bos taurus (Bovine).